We begin with the raw amino-acid sequence, 178 residues long: MAKTAIAYKEKMKELSMLSLICSCFYPEPRNITAYTYDDMEIKQLNKRASGQAFELILKPPSPVSEAPRTLASPKKKDVSLGEIQAKLEAAEDRRKSQEAQILKQLAEKREHEREVLQKALEENNNFSRMAEEKLILKMEQIKENREYYLASLMERLKEKERHAAEVRRNKEQLELSG.

In terms of domain architecture, SLD spans 38–178 (DDMEIKQLNK…RNKEQLELSG (141 aa)). The stretch at 75–178 (KKKDVSLGEI…RNKEQLELSG (104 aa)) forms a coiled coil.

The protein belongs to the stathmin family. As to expression, nervous tissue.

It is found in the cytoplasm. The protein resides in the membrane. Its subcellular location is the cell projection. It localises to the lamellipodium. This chain is Stathmin-2-A (stmn2-a), found in Xenopus laevis (African clawed frog).